We begin with the raw amino-acid sequence, 436 residues long: MTILALGINHKTASVNLRSKVAFDDQKRQLAFEQIQHRALAESVVILSTCNRTELYFHNAEITPREEHEDNIAWREQCFEWFAEIHQLEHNELRECIYFKQNMEAARHLMRVACGLDSLILGEPQILGQVKQAYQYSENFYQSQNSHISTKLSRLFQRTFSTAKRVRSETEIGSSAVSVAYAACGLARQIFDNFGKLRFLLVGAGETIELVARYLIQHGAKNIMIANRTPQRAETLAERLNTPMQILSLSALQIGLNQADIVISSTGSPDMLISKEMVEIAQKQRQFDPMLLIDIAVPRDIDENAGELDAVYSYSVDDLQHIIQRNMAQREQAAEQAAQIVDEECKAFFEWLKQQQSSDLIKRYRQDAEQTRQELLAKALVALTSGQDSEKVLNELSYKLTNSLLHVPTQALQAMAKSGNSQGLQSFSKALKLEEQ.

Substrate contacts are provided by residues 49–52, serine 118, 123–125, and glutamine 129; these read TCNR and EPQ. Catalysis depends on cysteine 50, which acts as the Nucleophile. Position 203–208 (203–208) interacts with NADP(+); it reads GAGETI.

This sequence belongs to the glutamyl-tRNA reductase family. As to quaternary structure, homodimer.

It catalyses the reaction (S)-4-amino-5-oxopentanoate + tRNA(Glu) + NADP(+) = L-glutamyl-tRNA(Glu) + NADPH + H(+). Its pathway is porphyrin-containing compound metabolism; protoporphyrin-IX biosynthesis; 5-aminolevulinate from L-glutamyl-tRNA(Glu): step 1/2. Catalyzes the NADPH-dependent reduction of glutamyl-tRNA(Glu) to glutamate 1-semialdehyde (GSA). The protein is Glutamyl-tRNA reductase of Actinobacillus pleuropneumoniae serotype 7 (strain AP76).